Consider the following 367-residue polypeptide: Nociceptin receptor (367 aa).

Residues 1 to 45 (MESLFPAPYWEVLYGSHFQGNLSLLNETVPHHLLLNASHSAFLPL) are Extracellular-facing. Asn-21, Asn-26, and Asn-36 each carry an N-linked (GlcNAc...) asparagine glycan. A helical membrane pass occupies residues 46–71 (GLKVTIVGLYLAVCIGGLLGNCLVMY). Residues 72-84 (VILRHTKMKTATN) are Cytoplasmic-facing. A helical transmembrane segment spans residues 85–106 (IYIFNLALADTLVLLTLPFQGT). Residues 107–121 (DILLGFWPFGNALCK) are Extracellular-facing. Cysteines 120 and 197 form a disulfide. Residues 122 to 143 (TVIAIDYYNMFTSTFTLTAMSV) form a helical membrane-spanning segment. At 144 to 162 (DRYVAICHPIRALDVRTSS) the chain is on the cytoplasmic side. The chain crosses the membrane as a helical span at residues 163–185 (KAQAVNVAIWALASVVGVPVAIM). The Extracellular portion of the chain corresponds to 186-208 (GSAQVEDEEIECLVEIPAPQDYW). A helical membrane pass occupies residues 209-233 (GPVFAICIFLFSFIIPVLIISVCYS). Residues 234-261 (LMIRRLRGVRLLSGSREKDRNLRRITRL) lie on the Cytoplasmic side of the membrane. The helical transmembrane segment at 262–282 (VLVVVAVFVGCWTPVQVFVLV) threads the bilayer. Residues 283-297 (QGLGVQPGSETAVAI) lie on the Extracellular side of the membrane. The chain crosses the membrane as a helical span at residues 298–319 (LRFCTALGYVNSCLNPILYAFL). At 320–367 (DENFKACFRKFCCASSLHREMQVSDRVRSIAKDVGLGCKTSETVPRPA) the chain is on the cytoplasmic side. Cys-331 carries S-palmitoyl cysteine lipidation.

It belongs to the G-protein coupled receptor 1 family. In terms of processing, phosphorylation at Ser-360 requires GRK3. As to expression, highly expressed in several brain areas, the intestine, liver and spleen. Detected in sympathetic stellate ganglion neurons.

It is found in the cell membrane. Its subcellular location is the cytoplasmic vesicle. Its function is as follows. G-protein coupled opioid receptor that functions as a receptor for the endogenous neuropeptide nociceptin. Ligand binding causes a conformation change that triggers signaling via guanine nucleotide-binding proteins (G proteins) and modulates the activity of down-stream effectors. Signaling via G proteins mediates inhibition of adenylate cyclase activity and calcium channel activity. Arrestins modulate signaling via G proteins and mediate the activation of alternative signaling pathways that lead to the activation of MAP kinases. Plays a role in modulating nociception and the perception of pain. Plays a role in the regulation of locomotor activity by the neuropeptide nociceptin. The protein is Nociceptin receptor (Oprl1) of Rattus norvegicus (Rat).